Reading from the N-terminus, the 917-residue chain is Protein translocase subunit SecA (917 aa).

Residues Gln87, Gly105–Thr109, and Asp513 each bind ATP. The disordered stretch occupies residues Glu834–Gly917. Residues Glu839 to Arg852 are compositionally biased toward basic and acidic residues. Residues Ala862–Glu876 show a composition bias toward low complexity. Zn(2+) is bound by residues Cys900, Cys902, Cys911, and His912.

It belongs to the SecA family. As to quaternary structure, monomer and homodimer. Part of the essential Sec protein translocation apparatus which comprises SecA, SecYEG and auxiliary proteins SecDF-YajC and YidC. Zn(2+) is required as a cofactor.

The protein resides in the cell inner membrane. It is found in the cytoplasm. It carries out the reaction ATP + H2O + cellular proteinSide 1 = ADP + phosphate + cellular proteinSide 2.. Its function is as follows. Part of the Sec protein translocase complex. Interacts with the SecYEG preprotein conducting channel. Has a central role in coupling the hydrolysis of ATP to the transfer of proteins into and across the cell membrane, serving both as a receptor for the preprotein-SecB complex and as an ATP-driven molecular motor driving the stepwise translocation of polypeptide chains across the membrane. The chain is Protein translocase subunit SecA from Saccharophagus degradans (strain 2-40 / ATCC 43961 / DSM 17024).